The primary structure comprises 339 residues: Aspartate carbamoyltransferase catalytic subunit (339 aa).

Arginine 69 and threonine 70 together coordinate carbamoyl phosphate. Lysine 97 contacts L-aspartate. Positions 119, 149, and 152 each coordinate carbamoyl phosphate. L-aspartate-binding residues include arginine 182 and arginine 237. Residues glycine 278 and proline 279 each contribute to the carbamoyl phosphate site.

Belongs to the aspartate/ornithine carbamoyltransferase superfamily. ATCase family. As to quaternary structure, heterododecamer (2C3:3R2) of six catalytic PyrB chains organized as two trimers (C3), and six regulatory PyrI chains organized as three dimers (R2).

It catalyses the reaction carbamoyl phosphate + L-aspartate = N-carbamoyl-L-aspartate + phosphate + H(+). It functions in the pathway pyrimidine metabolism; UMP biosynthesis via de novo pathway; (S)-dihydroorotate from bicarbonate: step 2/3. Catalyzes the condensation of carbamoyl phosphate and aspartate to form carbamoyl aspartate and inorganic phosphate, the committed step in the de novo pyrimidine nucleotide biosynthesis pathway. This Hydrogenovibrio crunogenus (strain DSM 25203 / XCL-2) (Thiomicrospira crunogena) protein is Aspartate carbamoyltransferase catalytic subunit.